The following is an 802-amino-acid chain: Phenylalanine--tRNA ligase beta subunit (802 aa).

In terms of domain architecture, tRNA-binding spans 39–150; sequence AKALKPFTIA…ADAPIGAAYA (112 aa). A B5 domain is found at 400–475; sequence GDDRVIDFPV…RIYGVDKVPM (76 aa). Mg(2+) is bound by residues Asp-453, Asp-459, Glu-462, and Glu-463. Residues 708–801 form the FDX-ACB domain; it reads SAFQPVSRDF…VTKKTGGTLR (94 aa).

The protein belongs to the phenylalanyl-tRNA synthetase beta subunit family. Type 1 subfamily. Tetramer of two alpha and two beta subunits. Mg(2+) is required as a cofactor.

Its subcellular location is the cytoplasm. The catalysed reaction is tRNA(Phe) + L-phenylalanine + ATP = L-phenylalanyl-tRNA(Phe) + AMP + diphosphate + H(+). The polypeptide is Phenylalanine--tRNA ligase beta subunit (Bradyrhizobium diazoefficiens (strain JCM 10833 / BCRC 13528 / IAM 13628 / NBRC 14792 / USDA 110)).